Here is a 311-residue protein sequence, read N- to C-terminus: Pyrimidine-specific ribonucleoside hydrolase RihA (311 aa).

H240 is a catalytic residue.

Belongs to the IUNH family. RihA subfamily.

Hydrolyzes with equal efficiency cytidine or uridine to ribose and cytosine or uracil, respectively. The polypeptide is Pyrimidine-specific ribonucleoside hydrolase RihA (Escherichia coli O157:H7).